We begin with the raw amino-acid sequence, 273 residues long: NADPH-dependent 7-cyano-7-deazaguanine reductase (273 aa).

Residue 81–83 coordinates substrate; that stretch reads VES. NADPH is bound at residue 83-84; it reads SK. The Thioimide intermediate role is filled by cysteine 179. The Proton donor role is filled by aspartate 186. 218–219 is a binding site for substrate; sequence AE. 247 to 248 lines the NADPH pocket; it reads RG.

Belongs to the GTP cyclohydrolase I family. QueF type 2 subfamily. In terms of assembly, homodimer.

The protein localises to the cytoplasm. It carries out the reaction 7-aminomethyl-7-carbaguanine + 2 NADP(+) = 7-cyano-7-deazaguanine + 2 NADPH + 3 H(+). It functions in the pathway tRNA modification; tRNA-queuosine biosynthesis. Catalyzes the NADPH-dependent reduction of 7-cyano-7-deazaguanine (preQ0) to 7-aminomethyl-7-deazaguanine (preQ1). This Rickettsia bellii (strain OSU 85-389) protein is NADPH-dependent 7-cyano-7-deazaguanine reductase.